The chain runs to 378 residues: LGILFSNANTWKEMRRFSLMTLRNFGMGKRSIEDRVQEEARCLVEELRKTNASPCDPTFILGCAPCNVICSIIFHNRFDYKDEHFLKLMEKFNENVRILSSPWLQICNNFPVLTDYLPGIHNTLVKNIEYTKNFIMEKVKEHQKSLDVNNPRDFIDCFLIKMDQENHLEFTLESLVTTVSDLFGAGTETTSTTLSISLLLLLKHPEVAAKVQEEIERVIGRHRSPCMQDRSRMPYTDAVIHEIQRYIDLIPINLPHAVTRDIKFRNYFIPKGMNIITSLTSVLHDEKEFPNPKVFDPGHFLDESGNFKKSDYFMPFSAGKRMCVGEGLARMELFLFLTSILQNFKLQSLVEPKDLDITAVVNGFASVPPAYQLCFSPV.

Residue Cys323 participates in heme binding.

The protein belongs to the cytochrome P450 family. It depends on heme as a cofactor.

The protein resides in the endoplasmic reticulum membrane. The protein localises to the microsome membrane. The catalysed reaction is an organic molecule + reduced [NADPH--hemoprotein reductase] + O2 = an alcohol + oxidized [NADPH--hemoprotein reductase] + H2O + H(+). Functionally, cytochromes P450 are a group of heme-thiolate monooxygenases. In liver microsomes, this enzyme is involved in an NADPH-dependent electron transport pathway. It oxidizes a variety of structurally unrelated compounds, including steroids, fatty acids, and xenobiotics. This Oryctolagus cuniculus (Rabbit) protein is Cytochrome P450 2C15 (CYP2C15).